The chain runs to 186 residues: Ribosome-recycling factor (186 aa).

The protein belongs to the RRF family.

Its subcellular location is the cytoplasm. Its function is as follows. Responsible for the release of ribosomes from messenger RNA at the termination of protein biosynthesis. May increase the efficiency of translation by recycling ribosomes from one round of translation to another. This chain is Ribosome-recycling factor, found in Burkholderia lata (strain ATCC 17760 / DSM 23089 / LMG 22485 / NCIMB 9086 / R18194 / 383).